Consider the following 181-residue polypeptide: Putative ankyrin repeat protein RF_0782 (181 aa).

2 ANK repeats span residues 24–53 (YHYSPLATAASVGSVEIVEALLSKGADINF) and 54–83 (GSTPSFITAIKNGHLKICYLLKALGANTQI).

The chain is Putative ankyrin repeat protein RF_0782 from Rickettsia felis (strain ATCC VR-1525 / URRWXCal2) (Rickettsia azadi).